The chain runs to 1060 residues: Bumetanide-sensitive sodium-(potassium)-chloride cotransporter (1060 aa).

Topologically, residues Met-1–Lys-122 are cytoplasmic. Transmembrane regions (helical) follow at residues Leu-123 to Phe-143 and Gly-154 to Leu-174. Residues Ser-175–Ser-197 are Cytoplasmic-facing. 2 consecutive transmembrane segments (helical) span residues Leu-198–Ala-218 and Ile-250–Glu-270. The Cytoplasmic portion of the chain corresponds to Ser-271 to Asn-275. A run of 2 helical transmembrane segments spans residues Phe-276–Pro-296 and Phe-332–Ile-352. Residues Ser-353–Thr-367 lie on the Cytoplasmic side of the membrane. Residues Leu-368 to Gly-388 traverse the membrane as a helical segment. N-linked (GlcNAc...) asparagine glycosylation is found at Asn-396, Asn-404, and Asn-419. The helical transmembrane segment at Val-432–Leu-452 threads the bilayer. Residues Ser-453 to Leu-497 lie on the Cytoplasmic side of the membrane. The next 2 helical transmembrane spans lie at Thr-498 to Ile-518 and Cys-563 to Phe-583. Residues Thr-584–Pro-642 lie on the Cytoplasmic side of the membrane. The chain crosses the membrane as a helical span at residues Ala-643–Ile-663. N-linked (GlcNAc...) asparagine glycosylation occurs at Asn-816. Residues Thr-882–Ile-902 form a helical membrane-spanning segment. Topologically, residues Ser-903–Ser-1060 are cytoplasmic.

Belongs to the SLC12A transporter family.

It localises to the membrane. Its function is as follows. Electrically silent transporter system. Mediates sodium and chloride reabsorption. Plays a vital role in the regulation of ionic balance and cell volume. The sequence is that of Bumetanide-sensitive sodium-(potassium)-chloride cotransporter from Manduca sexta (Tobacco hawkmoth).